Here is a 115-residue protein sequence, read N- to C-terminus: T cell receptor beta variable 12-5 (115 aa).

The N-terminal stretch at 1–21 (MATRLLCCVVLCLLGEELIDA) is a signal peptide. Residues 22–115 (RVTQTPRHKV…SAVYFCASGL (94 aa)) enclose the Ig-like domain. Residues cysteine 42 and cysteine 111 are joined by a disulfide bond.

Alpha-beta TR is a heterodimer composed of an alpha and beta chain; disulfide-linked. The alpha-beta TR is associated with the transmembrane signaling CD3 coreceptor proteins to form the TR-CD3 (TcR or TCR). The assembly of alpha-beta TR heterodimers with CD3 occurs in the endoplasmic reticulum where a single alpha-beta TR heterodimer associates with one CD3D-CD3E heterodimer, one CD3G-CD3E heterodimer and one CD247 homodimer forming a stable octameric structure. CD3D-CD3E and CD3G-CD3E heterodimers preferentially associate with TR alpha and TR beta chains, respectively. The association of the CD247 homodimer is the last step of TcR assembly in the endoplasmic reticulum and is required for transport to the cell surface.

The protein resides in the cell membrane. In terms of biological role, v region of the variable domain of T cell receptor (TR) beta chain that participates in the antigen recognition. Alpha-beta T cell receptors are antigen specific receptors which are essential to the immune response and are present on the cell surface of T lymphocytes. Recognize peptide-major histocompatibility (MH) (pMH) complexes that are displayed by antigen presenting cells (APC), a prerequisite for efficient T cell adaptive immunity against pathogens. Binding of alpha-beta TR to pMH complex initiates TR-CD3 clustering on the cell surface and intracellular activation of LCK that phosphorylates the ITAM motifs of CD3G, CD3D, CD3E and CD247 enabling the recruitment of ZAP70. In turn ZAP70 phosphorylates LAT, which recruits numerous signaling molecules to form the LAT signalosome. The LAT signalosome propagates signal branching to three major signaling pathways, the calcium, the mitogen-activated protein kinase (MAPK) kinase and the nuclear factor NF-kappa-B (NF-kB) pathways, leading to the mobilization of transcription factors that are critical for gene expression and essential for T cell growth and differentiation. The T cell repertoire is generated in the thymus, by V-(D)-J rearrangement. This repertoire is then shaped by intrathymic selection events to generate a peripheral T cell pool of self-MH restricted, non-autoaggressive T cells. Post-thymic interaction of alpha-beta TR with the pMH complexes shapes TR structural and functional avidity. This chain is T cell receptor beta variable 12-5, found in Homo sapiens (Human).